Here is a 350-residue protein sequence, read N- to C-terminus: Solute carrier family 35 member E4 (350 aa).

Over residues 19–30 (GAAAGGAQAAGP) the composition is skewed to low complexity. The tract at residues 19–42 (GAAAGGAQAAGPPEWPPGSPQALR) is disordered. 8 consecutive transmembrane segments (helical) span residues 51 to 71 (MAALVWLLAGASMSSLNKWIF), 73 to 93 (VHGFGRPLLLSALHMLVAALA), 110 to 132 (VLLLSLTFGTSMACGNVGLRAVP), 135 to 155 (LAQLVTTTTPLFTLALSALLL), 218 to 238 (VTLLYATSLPSFCLLAGAALV), 258 to 278 (ILLSCLLSVLYNLASFSLLAL), 279 to 299 (TSALTVHVLGNLTVVGNLILS), and 312 to 332 (YVGIALTLSGMFLYHNCEFVA). One can recognise an EamA domain in the interval 125-179 (NVGLRAVPLDLAQLVTTTTPLFTLALSALLLGRRHHPLQLAAMGPLCLGAACSLA).

The protein belongs to the TPT transporter family. SLC35E subfamily.

The protein resides in the membrane. Its function is as follows. Putative transporter. In Homo sapiens (Human), this protein is Solute carrier family 35 member E4 (SLC35E4).